We begin with the raw amino-acid sequence, 147 residues long: uncharacterized protein (147 aa).

Residues 3 to 23 form a helical membrane-spanning segment; it reads APMIGMVVLVVVLGLAVLALS.

To M.leprae ML1147.

It is found in the membrane. This is an uncharacterized protein from Mycobacterium tuberculosis (strain CDC 1551 / Oshkosh).